Here is a 24-residue protein sequence, read N- to C-terminus: Retinol-binding protein 3 (24 aa).

It is found in the secreted. Its subcellular location is the extracellular space. The protein localises to the extracellular matrix. It localises to the interphotoreceptor matrix. IRBP shuttles 11-cis and all trans retinoids between the retinol isomerase in the pigment epithelium and the visual pigments in the photoreceptor cells of the retina. The sequence is that of Retinol-binding protein 3 (RBP3) from Ovis aries (Sheep).